We begin with the raw amino-acid sequence, 231 residues long: Triggering receptor expressed on myeloid cells 1 (231 aa).

The N-terminal stretch at 1–20 (MRKTRLWGLLWMFFVSELLA) is a signal peptide. Over 21 to 202 (ATKLTEEKYE…TDIIRVPVFN (182 aa)) the chain is Extracellular. An Ig-like V-type domain is found at 26-131 (EEKYELKEGQ…LFDRIRLVVT (106 aa)). Cys-41 and Cys-110 form a disulfide bridge. Composition is skewed to polar residues over residues 134 to 157 (SSGTPGSSENSTPNVYKTPPTTTK) and 164 to 182 (TSPTTVTQAPPKSTADVST). Positions 134–182 (SSGTPGSSENSTPNVYKTPPTTTKALRPLYTSPTTVTQAPPKSTADVST) are disordered. N-linked (GlcNAc...) asparagine glycosylation is found at Asn-188 and Asn-191. Residues 203–223 (IAILVAGGFLSKSLVFSVLFA) form a helical membrane-spanning segment. Topologically, residues 224-231 (VTLRSFVP) are cytoplasmic.

As to quaternary structure, monomer. Homomultimer; when activated. Interacts with TYROBP/DAP12. Interacts with TLR4.

The protein resides in the cell membrane. Cell surface receptor that plays important roles in innate and adaptive immunity by amplifying inflammatory responses. Upon activation by various ligands such as PGLYRP1, HMGB1 or HSP70, multimerizes and forms a complex with transmembrane adapter TYROBP/DAP12. In turn, initiates a SYK-mediated cascade of tyrosine phosphorylation, activating multiple downstream mediators such as BTK, MAPK1, MAPK3 or phospholipase C-gamma. This cascade promotes the neutrophil- and macrophage-mediated release of pro-inflammatory cytokines and/or chemokines, as well as their migration and thereby amplifies inflammatory responses that are triggered by bacterial and fungal infections. By also promoting the amplification of inflammatory signals that are initially triggered by Toll-like receptor (TLR) and NOD-like receptor engagement, plays a major role in the pathophysiology of acute and chronic inflammatory diseases of different etiologies including septic shock and atherosclerosis. The sequence is that of Triggering receptor expressed on myeloid cells 1 (TREM1) from Pongo abelii (Sumatran orangutan).